A 278-amino-acid polypeptide reads, in one-letter code: Proteolipid protein DM beta (278 aa).

4 helical membrane-spanning segments follow: residues 30–46 (LIAT…FCGC), 84–100 (VIYG…ILLM), 130–146 (FIML…GVTA), and 213–229 (LFIV…IAMV).

This sequence belongs to the myelin proteolipid protein family.

The protein resides in the membrane. This is Proteolipid protein DM beta from Squalus acanthias (Spiny dogfish).